The primary structure comprises 59 residues: Large ribosomal subunit protein bL32 (59 aa).

This sequence belongs to the bacterial ribosomal protein bL32 family.

This chain is Large ribosomal subunit protein bL32, found in Synechococcus sp. (strain JA-2-3B'a(2-13)) (Cyanobacteria bacterium Yellowstone B-Prime).